The primary structure comprises 28 residues: Turritoxin F21-2 (28 aa).

As to expression, expressed by the venom duct.

The protein localises to the secreted. Potent inhibitor of human alpha-3-beta-2 nAChRs (IC(50)=566.2 nM). Irreversibly inhibits the acetylcholine-induced response on human alpha-7/CHRNA7 (55% inhibition at 5.6 uM) and alpha-3-beta-2/CHRNA3-CHRNB2 (91% inhibition) nAChRs. This is Turritoxin F21-2 from Polystira nobilis (Sea snail).